Consider the following 543-residue polypeptide: Chaperonin GroEL (543 aa).

Residues 29–32 (TLGP), 86–90 (DGTTT), Gly413, 476–478 (NAA), and Asp492 contribute to the ATP site.

Belongs to the chaperonin (HSP60) family. In terms of assembly, forms a cylinder of 14 subunits composed of two heptameric rings stacked back-to-back. Interacts with the co-chaperonin GroES.

The protein localises to the cytoplasm. The catalysed reaction is ATP + H2O + a folded polypeptide = ADP + phosphate + an unfolded polypeptide.. Its function is as follows. Together with its co-chaperonin GroES, plays an essential role in assisting protein folding. The GroEL-GroES system forms a nano-cage that allows encapsulation of the non-native substrate proteins and provides a physical environment optimized to promote and accelerate protein folding. The protein is Chaperonin GroEL of Streptococcus pyogenes serotype M3 (strain SSI-1).